Here is a 170-residue protein sequence, read N- to C-terminus: Large ribosomal subunit protein uL22c (170 aa).

This sequence belongs to the universal ribosomal protein uL22 family. As to quaternary structure, part of the 50S ribosomal subunit.

Its subcellular location is the plastid. The protein localises to the chloroplast. In terms of biological role, this protein binds specifically to 23S rRNA. The globular domain of the protein is located near the polypeptide exit tunnel on the outside of the subunit, while an extended beta-hairpin is found that lines the wall of the exit tunnel in the center of the 70S ribosome. In Nandina domestica (Heavenly bamboo), this protein is Large ribosomal subunit protein uL22c (rpl22).